The following is a 547-amino-acid chain: Chaperonin GroEL (547 aa).

ATP is bound by residues T30 to P33, K51, D87 to T91, G415, and D496. The disordered stretch occupies residues S527–F547. Positions G537–F547 are enriched in gly residues.

It belongs to the chaperonin (HSP60) family. As to quaternary structure, forms a cylinder of 14 subunits composed of two heptameric rings stacked back-to-back. Interacts with the co-chaperonin GroES.

Its subcellular location is the cytoplasm. The catalysed reaction is ATP + H2O + a folded polypeptide = ADP + phosphate + an unfolded polypeptide.. Its function is as follows. Together with its co-chaperonin GroES, plays an essential role in assisting protein folding. The GroEL-GroES system forms a nano-cage that allows encapsulation of the non-native substrate proteins and provides a physical environment optimized to promote and accelerate protein folding. This Rickettsia africae (strain ESF-5) protein is Chaperonin GroEL.